The chain runs to 235 residues: 2-C-methyl-D-erythritol 4-phosphate cytidylyltransferase (235 aa).

The protein belongs to the IspD/TarI cytidylyltransferase family. IspD subfamily.

It catalyses the reaction 2-C-methyl-D-erythritol 4-phosphate + CTP + H(+) = 4-CDP-2-C-methyl-D-erythritol + diphosphate. The protein operates within isoprenoid biosynthesis; isopentenyl diphosphate biosynthesis via DXP pathway; isopentenyl diphosphate from 1-deoxy-D-xylulose 5-phosphate: step 2/6. In terms of biological role, catalyzes the formation of 4-diphosphocytidyl-2-C-methyl-D-erythritol from CTP and 2-C-methyl-D-erythritol 4-phosphate (MEP). The polypeptide is 2-C-methyl-D-erythritol 4-phosphate cytidylyltransferase (Leptospira borgpetersenii serovar Hardjo-bovis (strain L550)).